The sequence spans 156 residues: Transcription elongation factor GreA (156 aa).

The stretch at 46 to 66 (AEYHAAREKQSFVEGRIKELE) forms a coiled coil.

Belongs to the GreA/GreB family.

Functionally, necessary for efficient RNA polymerase transcription elongation past template-encoded arresting sites. The arresting sites in DNA have the property of trapping a certain fraction of elongating RNA polymerases that pass through, resulting in locked ternary complexes. Cleavage of the nascent transcript by cleavage factors such as GreA or GreB allows the resumption of elongation from the new 3'terminus. GreA releases sequences of 2 to 3 nucleotides. The chain is Transcription elongation factor GreA from Paracoccus denitrificans (strain Pd 1222).